The sequence spans 286 residues: Elongation factor Ts (286 aa).

The segment at 79–82 (TDFV) is involved in Mg(2+) ion dislocation from EF-Tu.

It belongs to the EF-Ts family.

It is found in the cytoplasm. Its function is as follows. Associates with the EF-Tu.GDP complex and induces the exchange of GDP to GTP. It remains bound to the aminoacyl-tRNA.EF-Tu.GTP complex up to the GTP hydrolysis stage on the ribosome. This is Elongation factor Ts from Wolbachia pipientis wMel.